The primary structure comprises 481 residues: Putative amino-acid transporter CPE0389 (481 aa).

13 helical membrane passes run 7 to 27, 36 to 56, 87 to 107, 127 to 147, 156 to 176, 208 to 228, 241 to 261, 289 to 309, 338 to 358, 364 to 384, 401 to 421, 422 to 442, and 461 to 481; these read LGVIALAGVVISAMLGGGVYN, ASAGAILISWIITGIGIWFIA, FLMAWGYWICNSFANVGYAVL, LSIACGSLVLWIIFFIVLAGV, IGTIGKLLPLAIFLLVLLFSF, STMLVTLWVFTGIEGAVVVSG, FLGFITCLLIYTLLSLLPLGV, VIMNLGVIIAILSSWLIWTVM, FSLLASTIIMQIILILVHFAG, MLSITSVMALPCYLVSTLYLF, RKYAMITAILGSIYGVWLIYA, AGINYMLIAIVIYALGIPVFI, and YFAIVLIILALIGLVYLFKFM.

Belongs to the amino acid-polyamine-organocation (APC) superfamily. Basic amino acid/polyamine antiporter (APA) (TC 2.A.3.2) family.

It localises to the cell membrane. Its function is as follows. Could be an amino acid transporter. The chain is Putative amino-acid transporter CPE0389 from Clostridium perfringens (strain 13 / Type A).